The following is a 1024-amino-acid chain: MDFTHFDDVAFAYYGLPDQSSLVSLLDHTHTFQSPTAFPQHQAMSGLAHSGLPFGTLPTGNRSQSMEGSKAPPDRTSPASNAFENPTTDEFGLASCNRADGTDLGGKPREDKAGATPAWSGLKTKAGKERKRLPLACIACRRKKVRCSGEKPACKHCLHSHIPCVYKVTTRKAAPRTNYMVMLDKRPKCMEERIIKATPKSDQEVASFVTRPVVKPAIPGAVPSSKPTKKRGAEEAFGLDLEAWAKAPSKPKIEGDDRPSSLQAQEGEENKLQHEGTEALPSEEIQEHLAEVFFDNIYGQSYHLLHKPSYLRKLKNGTLPPVLVLTVCAVAARFTSNPLGGRSWALGGQAIRMAFALQLHKDLEYDPSGRNGAKTQLSFIDREIRRRIMWACFLLDRFNSSGTDRPMFIREDTIQIPLPVKEKYFQFDMPAPTELLDGQVPHPPSPNDGQIADARENMGVAAFLIRAIALWGRIITYLSQGCKDLDPNLLWEEEPHYIKHLNDAVNLEASLPLSLNYSAENLEVHKTENAASQFLFMHICLQHNILLVSRAAMSARKQQGVHDDFFSEASQRTFSAANRISEFLREAEQSRCFVSAPFAGYCAFSSATVHILGIISCNPSMKPTAEANLTTNVKYLHKMKKYWERATQLSFLQYGDWYNRYPRGLSDAEFMDPATHKRKDSGADGVLEAKPELRSVEEYSTLPTPRRVENKDTIRAAAPKRKQSAKKQTGMPAQPGQHLDSLQSTDADAVSQERKFSGGLGLQITGAAGFNPLSASNQQNPDFSTTMSPTSPANMTPFSHYAHTPTFFPPELLSIDFGQGSNGNIDPLDRQLIYGGYSMDASTGLCGGQDMMSGLGWDTVASGAQPDGCLQGRPPNVKAGMHGQSAASSSFPAINKTNGKGKEGRGIGSHTDYGLLVIAAADDVGGDMMQYMTNSVLPSTPHKVGLNLRERFAFAYFHEPSFQAVVRPLPGYDHGQEPKGGIHYGKQFTDMFMRNYPQRITTQRLNDEGRYRLLDQESLQTMSP.

The zn(2)-C6 fungal-type DNA-binding region spans Cys137–Cys164.

It is found in the nucleus. In terms of biological role, zn(2)-C6 fungal-type transcription factor that has a role in the establishment of the fungus within the plant and/or the progress of the disease. Regulates the expression of virulence factors such as SIX1 and SIX6. This chain is Zn(2)-C6 fungal-type transcription factor FTF1a, found in Fusarium oxysporum f. sp. lycopersici (strain 4287 / CBS 123668 / FGSC 9935 / NRRL 34936) (Fusarium vascular wilt of tomato).